Consider the following 496-residue polypeptide: Glutamyl-tRNA(Gln) amidotransferase subunit A (496 aa).

Residues lysine 75 and serine 150 each act as charge relay system in the active site. Serine 174 functions as the Acyl-ester intermediate in the catalytic mechanism.

It belongs to the amidase family. GatA subfamily. Heterotrimer of A, B and C subunits.

It catalyses the reaction L-glutamyl-tRNA(Gln) + L-glutamine + ATP + H2O = L-glutaminyl-tRNA(Gln) + L-glutamate + ADP + phosphate + H(+). In terms of biological role, allows the formation of correctly charged Gln-tRNA(Gln) through the transamidation of misacylated Glu-tRNA(Gln) in organisms which lack glutaminyl-tRNA synthetase. The reaction takes place in the presence of glutamine and ATP through an activated gamma-phospho-Glu-tRNA(Gln). The protein is Glutamyl-tRNA(Gln) amidotransferase subunit A of Burkholderia mallei (strain NCTC 10247).